Consider the following 1299-residue polypeptide: DNA-directed RNA polymerase subunit beta' (1299 aa).

Residues C60, C62, C75, and C78 each contribute to the Zn(2+) site. Mg(2+)-binding residues include D535, D537, and D539. Zn(2+) is bound by residues C877, C954, C961, and C964.

The protein belongs to the RNA polymerase beta' chain family. As to quaternary structure, the RNAP catalytic core consists of 2 alpha, 1 beta, 1 beta' and 1 omega subunit. When a sigma factor is associated with the core the holoenzyme is formed, which can initiate transcription. The cofactor is Mg(2+). Zn(2+) serves as cofactor.

It carries out the reaction RNA(n) + a ribonucleoside 5'-triphosphate = RNA(n+1) + diphosphate. DNA-dependent RNA polymerase catalyzes the transcription of DNA into RNA using the four ribonucleoside triphosphates as substrates. The protein is DNA-directed RNA polymerase subunit beta' of Paenarthrobacter aurescens (strain TC1).